A 311-amino-acid polypeptide reads, in one-letter code: Methionyl-tRNA formyltransferase (311 aa).

Residue 110 to 113 (SLLP) coordinates (6S)-5,6,7,8-tetrahydrofolate.

Belongs to the Fmt family.

It catalyses the reaction L-methionyl-tRNA(fMet) + (6R)-10-formyltetrahydrofolate = N-formyl-L-methionyl-tRNA(fMet) + (6S)-5,6,7,8-tetrahydrofolate + H(+). Its function is as follows. Attaches a formyl group to the free amino group of methionyl-tRNA(fMet). The formyl group appears to play a dual role in the initiator identity of N-formylmethionyl-tRNA by promoting its recognition by IF2 and preventing the misappropriation of this tRNA by the elongation apparatus. The sequence is that of Methionyl-tRNA formyltransferase from Streptococcus pneumoniae (strain Taiwan19F-14).